Here is an 813-residue protein sequence, read N- to C-terminus: MSQDPFQEREAEKYANPIPSREFILEHLTKREKPASRDELAVELHIEGEEQLEGLRRRLRAMERDGQLVFTRRQCYALPERLDLVKGTVIGHRDGYGFLRVEGRKDDLYLSSEQMKTCIHGDQVLAQPLGADRKGRREARIVRVLVPKTSQIVGRYFTEAGVGFVVPDDSRLSFDILIPPDQIMGARMGFVVVVELTQRPTRRTKAVGKIVEVLGDNMGTGMAVDIALRTHEIPYIWPQAVEQQVAGLKEEVPEEAKAGRVDLRDLPLVTIDGEDARDFDDAVYCEKKRGGGWRLWVAIADVSYYVRPSTPLDREARNRGTSVYFPSQVIPMLPEVLSNGLCSLNPQVDRLCMVCEMTVSSKGRLTGYKFYEAVMSSHARLTYTKVWHILQGDQDLREQYAPLVKHLEELHNLYKVLDKAREERGGISFESEEAKFIFNAERRIERIEQTQRNDAHKLIEECMILANISAARFVEKAKEPALFRIHDKPSTEAITSFRSVLAELGLELPGGNKPEPRDYAELLESVADRPDAEMLQTMLLRSMKQAIYDPENRGHFGLALQSYAHFTSPIRRYPDLTLHRAIKYLLAKEQGHQGNTTETGGYHYSMEEMLQLGQHCSMAERRADEATRDVADWLKCDFMLDQVGNVFKGVISSVTGFGFFVRLDDLFIDGLVHVSSLDNDYYRFDQVGQRLMGESSGQTYRLGDRVEVRVEAVNMDERKIDFSLISSERAPRNVGKTAREKAKKGDAGKKGGKRRQVGKKVNFEPDSAFRGEKKTKPKAAKKDARKAKKPSAKTQKIAAATKAKRAAKKKVAE.

The RNB domain occupies 260–587 (RVDLRDLPLV…LHRAIKYLLA (328 aa)). The residue at position 544 (lysine 544) is an N6-acetyllysine; by PatZ. Positions 644 to 725 (GNVFKGVISS…DERKIDFSLI (82 aa)) constitute an S1 motif domain. The interval 731–813 (PRNVGKTARE…KRAAKKKVAE (83 aa)) is disordered. 2 stretches are compositionally biased toward basic and acidic residues: residues 737–749 (TAREKAKKGDAGK) and 761–774 (VNFEPDSAFRGEKK). Positions 775-791 (TKPKAAKKDARKAKKPS) are enriched in basic residues. Residues 792 to 801 (AKTQKIAAAT) show a composition bias toward low complexity. Residues 802–813 (KAKRAAKKKVAE) are compositionally biased toward basic residues.

It belongs to the RNR ribonuclease family. RNase R subfamily. In terms of assembly, monomer. Mg(2+) serves as cofactor. Acetylated at Lys-544 by PatZ during exponential growth phase. Acetylation alters RNase R structure and enhances binding of SsrA/tmRNA and SmpB, leading to instability and degradation of RNase R. Not acetylated and stable in stationary phase cells.

The protein localises to the cytoplasm. It catalyses the reaction Exonucleolytic cleavage in the 3'- to 5'-direction to yield nucleoside 5'-phosphates.. Its activity is regulated as follows. Stimulated by the presence of a monovalent cation. Highly unstable in exponential growth phase. This instability is due to the binding of SsrA/tmRNA and its associated protein SmpB to the C-terminal region of RNase R. In contrast, RNase R becomes stabilized upon entry into stationary phase. The difference in stability between exponential and stationary phase is due to the acetylation of a single lysine residue. In terms of biological role, 3'-5' exoribonuclease that releases 5'-nucleoside monophosphates and is involved in maturation of structured RNAs (rRNAs, tRNAs and SsrA/tmRNA). In stationary phase, involved in the post-transcriptional regulation of ompA mRNA stability. Shortens RNA processively to di- and trinucleotides. In vitro, exhibits helicase activity, which is independent of its RNase activity. RNases 2 and R (rnb and this entry) contribute to rRNA degradation during starvation, while RNase R and PNPase (this entry and pnp) are the major contributors to quality control of rRNA during steady state growth. Required for the expression of virulence genes in enteroinvasive strains of E.coli. The chain is Ribonuclease R (rnr) from Escherichia coli (strain K12).